Here is a 141-residue protein sequence, read N- to C-terminus: Large-conductance mechanosensitive channel (141 aa).

The next 2 helical transmembrane spans lie at 16-36 (VIDL…VDSL) and 86-106 (GNFI…FLMV).

The protein belongs to the MscL family. As to quaternary structure, homopentamer.

It localises to the cell inner membrane. Functionally, channel that opens in response to stretch forces in the membrane lipid bilayer. May participate in the regulation of osmotic pressure changes within the cell. The sequence is that of Large-conductance mechanosensitive channel from Ralstonia nicotianae (strain ATCC BAA-1114 / GMI1000) (Ralstonia solanacearum).